We begin with the raw amino-acid sequence, 113 residues long: Large ribosomal subunit protein uL22 (113 aa).

The protein belongs to the universal ribosomal protein uL22 family. In terms of assembly, part of the 50S ribosomal subunit.

Functionally, this protein binds specifically to 23S rRNA; its binding is stimulated by other ribosomal proteins, e.g. L4, L17, and L20. It is important during the early stages of 50S assembly. It makes multiple contacts with different domains of the 23S rRNA in the assembled 50S subunit and ribosome. The globular domain of the protein is located near the polypeptide exit tunnel on the outside of the subunit, while an extended beta-hairpin is found that lines the wall of the exit tunnel in the center of the 70S ribosome. The sequence is that of Large ribosomal subunit protein uL22 from Bacillus thuringiensis subsp. konkukian (strain 97-27).